A 566-amino-acid chain; its full sequence is Glutamate--tRNA ligase (566 aa).

The short motif at 93–103 (PNPDYTIHLGN) is the 'HIGH' region element.

This sequence belongs to the class-I aminoacyl-tRNA synthetase family. Glutamate--tRNA ligase type 2 subfamily.

It localises to the cytoplasm. The enzyme catalyses tRNA(Glu) + L-glutamate + ATP = L-glutamyl-tRNA(Glu) + AMP + diphosphate. Its function is as follows. Catalyzes the attachment of glutamate to tRNA(Glu) in a two-step reaction: glutamate is first activated by ATP to form Glu-AMP and then transferred to the acceptor end of tRNA(Glu). In Staphylothermus marinus (strain ATCC 43588 / DSM 3639 / JCM 9404 / F1), this protein is Glutamate--tRNA ligase.